The chain runs to 380 residues: Cytochrome b (380 aa).

4 helical membrane-spanning segments follow: residues 34 to 54, 78 to 99, 114 to 134, and 179 to 199; these read FGSLLGICLATQILTGLLLAM, WLIRNLHANGASFFFICIYLHI, WNTGILLLLTLMATAFVGYVL, and FFALHFLLPFVIAGLTLIHLT. The heme b site is built by His84 and His98. Residues His183 and His197 each coordinate heme b. Residue His202 coordinates a ubiquinone. The next 4 membrane-spanning stretches (helical) occupy residues 227–247, 289–309, 321–341, and 348–368; these read LKDILGFMLMFLSLTTLALFS, LGGVLALAASVLMMFLSPLLH, LSQLLFWTLVANLFILTWVGS, and FIIIGQLASFTYFTILLILLP.

It belongs to the cytochrome b family. In terms of assembly, the cytochrome bc1 complex contains 11 subunits: 3 respiratory subunits (MT-CYB, CYC1 and UQCRFS1), 2 core proteins (UQCRC1 and UQCRC2) and 6 low-molecular weight proteins (UQCRH/QCR6, UQCRB/QCR7, UQCRQ/QCR8, UQCR10/QCR9, UQCR11/QCR10 and a cleavage product of UQCRFS1). This cytochrome bc1 complex then forms a dimer. It depends on heme b as a cofactor.

It localises to the mitochondrion inner membrane. Component of the ubiquinol-cytochrome c reductase complex (complex III or cytochrome b-c1 complex) that is part of the mitochondrial respiratory chain. The b-c1 complex mediates electron transfer from ubiquinol to cytochrome c. Contributes to the generation of a proton gradient across the mitochondrial membrane that is then used for ATP synthesis. The protein is Cytochrome b (MT-CYB) of Pelagodroma marina (White-faced storm-petrel).